The chain runs to 677 residues: Forkhead box protein P1 (677 aa).

Over residues 1-18 the composition is skewed to polar residues; that stretch reads MMQESGTETKSNGSAIQN. The interval 1–43 is disordered; that stretch reads MMQESGTETKSNGSAIQNGSGGSNHLLECGGLREGRSNGETPA. Position 83 is a phosphoserine (serine 83). Residues 270 to 283 are compositionally biased toward polar residues; sequence IMNPHASTNGQLSV. Residues 270 to 298 are disordered; it reads IMNPHASTNGQLSVHTPKRESLSHEEHPH. Residues 286 to 298 are compositionally biased toward basic and acidic residues; sequence PKRESLSHEEHPH. Lysine 287 is covalently cross-linked (Glycyl lysine isopeptide (Lys-Gly) (interchain with G-Cter in SUMO2)). The C2H2-type zinc-finger motif lies at 306-331; the sequence is GVCKWPGCEAVCEDFQSFLKHLNSEH. The interval 348 to 369 is leucine-zipper; sequence VQQLELQLAKDKERLQAMMTHL. Residues lysine 372 and lysine 377 each participate in a glycyl lysine isopeptide (Lys-Gly) (interchain with G-Cter in SUMO2) cross-link. Positions 382 to 386 are CTBP1-binding; that stretch reads PLNLV. A compositionally biased stretch (polar residues) spans 390–403; it reads TLSKSASEASPQSL. Residues 390 to 422 form a disordered region; sequence TLSKSASEASPQSLPHTPTTPTAPLTPVTQGPS. Positions 404–418 are enriched in low complexity; it reads PHTPTTPTAPLTPVT. Lysine 442 is covalently cross-linked (Glycyl lysine isopeptide (Lys-Gly) (interchain with G-Cter in SUMO2)). Positions 465–555 form a DNA-binding region, fork-head; the sequence is RPPFTYASLI…PQKISGNPSL (91 aa). Positions 611 to 677 are disordered; that stretch reads EHTNSNESDS…EDEPVNEDME (67 aa). A compositionally biased stretch (polar residues) spans 612–623; it reads HTNSNESDSSPG. Residue threonine 653 is modified to Phosphothreonine. At serine 658 the chain carries Phosphoserine. Over residues 667-677 the composition is skewed to acidic residues; the sequence is YEDEPVNEDME.

In terms of assembly, forms homodimers and heterodimers with FOXP2 and FOXP4. Dimerization is required for DNA-binding. Self-associates. Interacts with CTBP1. Interacts with NCOR2 and AR. Interacts with FOXP2. Interacts with TBR1. Interacts with AURKA; this interaction facilitates the phosphorylation of FOXP1, which suppresses the expression of FBXL7. Interacts with ZMYM2. In terms of tissue distribution, isoform 8 is specifically expressed in embryonic stem cells.

The protein resides in the nucleus. Its function is as follows. Transcriptional repressor. Can act with CTBP1 to synergistically repress transcription but CTPBP1 is not essential. Plays an important role in the specification and differentiation of lung epithelium. Acts cooperatively with FOXP4 to regulate lung secretory epithelial cell fate and regeneration by restricting the goblet cell lineage program; the function may involve regulation of AGR2. Essential transcriptional regulator of B-cell development. Involved in regulation of cardiac muscle cell proliferation. Involved in the columnar organization of spinal motor neurons. Promotes the formation of the lateral motor neuron column (LMC) and the preganglionic motor column (PGC) and is required for respective appropriate motor axon projections. The segment-appropriate generation of spinal cord motor columns requires cooperation with other Hox proteins. Can regulate PITX3 promoter activity; may promote midbrain identity in embryonic stem cell-derived dopamine neurons by regulating PITX3. Negatively regulates the differentiation of T follicular helper cells T(FH)s. Involved in maintenance of hair follicle stem cell quiescence; the function probably involves regulation of FGF18. Represses transcription of various pro-apoptotic genes and cooperates with NF-kappa B-signaling in promoting B-cell expansion by inhibition of caspase-dependent apoptosis. Binds to CSF1R promoter elements and is involved in regulation of monocyte differentiation and macrophage functions; repression of CSF1R in monocytes seems to involve NCOR2 as corepressor. Involved in endothelial cell proliferation, tube formation and migration indicative for a role in angiogenesis; the role in neovascularization seems to implicate suppression of SEMA5B. Can negatively regulate androgen receptor signaling. Acts as a transcriptional activator of the FBXL7 promoter; this activity is regulated by AURKA. Functionally, involved in transcriptional regulation in embryonic stem cells (ESCs). Stimulates expression of transcription factors that are required for pluripotency and decreases expression of differentiation-associated genes. Has distinct DNA-binding specifities as compared to the canonical form and preferentially binds DNA with the sequence 5'-CGATACAA-3' (or closely related sequences). Promotes ESC self-renewal and pluripotency. The sequence is that of Forkhead box protein P1 (FOXP1) from Homo sapiens (Human).